A 726-amino-acid polypeptide reads, in one-letter code: Catalase-peroxidase (726 aa).

Residues 1–33 are disordered; it reads MSTTDDTHNTLSTGKCPFHQGGHDRSAGAGTAS. Positions 105 to 226 form a cross-link, tryptophyl-tyrosyl-methioninium (Trp-Tyr) (with M-252); it reads WHGAGTYRSI…LGATEMGLIY (122 aa). The active-site Proton acceptor is the His-106. The segment at residues 226–252 is a cross-link (tryptophyl-tyrosyl-methioninium (Tyr-Met) (with W-105)); sequence YVNPEGPDHSGEPLSAAAAIRATFGNM. Residue His-267 participates in heme b binding.

This sequence belongs to the peroxidase family. Peroxidase/catalase subfamily. Homodimer or homotetramer. Heme b is required as a cofactor. In terms of processing, formation of the three residue Trp-Tyr-Met cross-link is important for the catalase, but not the peroxidase activity of the enzyme.

It catalyses the reaction H2O2 + AH2 = A + 2 H2O. It carries out the reaction 2 H2O2 = O2 + 2 H2O. Bifunctional enzyme with both catalase and broad-spectrum peroxidase activity. The chain is Catalase-peroxidase from Salmonella paratyphi A (strain ATCC 9150 / SARB42).